Consider the following 195-residue polypeptide: Interferon tau-11 (195 aa).

An N-terminal signal peptide occupies residues 1–23 (MAFVLSLLMALVLVSYGPGGSLG). 2 disulfides stabilise this stretch: C24-C122 and C52-C162. N101 carries an N-linked (GlcNAc...) asparagine glycan.

The protein belongs to the alpha/beta interferon family. IFN-alphaII subfamily. In terms of tissue distribution, constitutively and exclusively expressed in the mononuclear cells of the extraembryonic trophectoderm.

It is found in the secreted. Its function is as follows. Paracrine hormone primarily responsible for maternal recognition of pregnancy. Interacts with endometrial receptors, probably type I interferon receptors, and blocks estrogen receptor expression, preventing the estrogen-induced increase in oxytocin receptor expression in the endometrium. This results in the suppression of the pulsatile endometrial release of the luteolytic hormone prostaglandin F2-alpha, hindering the regression of the corpus luteum (luteolysis) and therefore a return to ovarian cyclicity. This, and a possible direct effect of IFN-tau on prostaglandin synthesis, leads in turn to continued ovarian progesterone secretion, which stimulates the secretion by the endometrium of the nutrients required for the growth of the conceptus. In summary, displays particularly high antiviral and antiproliferative potency concurrently with particular weak cytotoxicity, high antiluteolytic activity and immunomodulatory properties. In contrast with other IFNs, IFN-tau is not virally inducible. The polypeptide is Interferon tau-11 (IFNT11) (Ovis aries (Sheep)).